The primary structure comprises 356 residues: S-adenosylmethionine:tRNA ribosyltransferase-isomerase (356 aa).

The protein belongs to the QueA family. Monomer.

It is found in the cytoplasm. It catalyses the reaction 7-aminomethyl-7-carbaguanosine(34) in tRNA + S-adenosyl-L-methionine = epoxyqueuosine(34) in tRNA + adenine + L-methionine + 2 H(+). It participates in tRNA modification; tRNA-queuosine biosynthesis. Transfers and isomerizes the ribose moiety from AdoMet to the 7-aminomethyl group of 7-deazaguanine (preQ1-tRNA) to give epoxyqueuosine (oQ-tRNA). The protein is S-adenosylmethionine:tRNA ribosyltransferase-isomerase of Escherichia coli (strain ATCC 8739 / DSM 1576 / NBRC 3972 / NCIMB 8545 / WDCM 00012 / Crooks).